A 311-amino-acid chain; its full sequence is Malate dehydrogenase (311 aa).

Residues 7–13 and aspartate 34 contribute to the NAD(+) site; that span reads GAAGGIG. Substrate-binding residues include arginine 81 and arginine 87. NAD(+)-binding positions include asparagine 94 and 117-119; that span reads ITN. Residues asparagine 119 and arginine 153 each coordinate substrate. The Proton acceptor role is filled by histidine 177. An NAD(+)-binding site is contributed by methionine 227.

It belongs to the LDH/MDH superfamily. MDH type 1 family. As to quaternary structure, homodimer.

It carries out the reaction (S)-malate + NAD(+) = oxaloacetate + NADH + H(+). Functionally, catalyzes the reversible oxidation of malate to oxaloacetate. The polypeptide is Malate dehydrogenase (Shewanella halifaxensis (strain HAW-EB4)).